Here is a 271-residue protein sequence, read N- to C-terminus: Chorismate dehydratase (271 aa).

The protein belongs to the MqnA/MqnD family. MqnA subfamily.

It carries out the reaction chorismate = 3-[(1-carboxyvinyl)-oxy]benzoate + H2O. Its pathway is quinol/quinone metabolism; menaquinone biosynthesis. In terms of biological role, catalyzes the dehydration of chorismate into 3-[(1-carboxyvinyl)oxy]benzoate, a step in the biosynthesis of menaquinone (MK, vitamin K2). This Thermus thermophilus (strain ATCC 27634 / DSM 579 / HB8) protein is Chorismate dehydratase.